The following is a 73-amino-acid chain: Tetrahydromethanopterin S-methyltransferase subunit G (73 aa).

A helical transmembrane segment spans residues 48 to 68 (IGILYGAVVGLLLFLIYVSVS).

It belongs to the MtrG family. The complex is composed of 8 subunits; MtrA, MtrB, MtrC, MtrD, MtrE, MtrF, MtrG and MtrH.

It is found in the cell membrane. The catalysed reaction is 5-methyl-5,6,7,8-tetrahydromethanopterin + coenzyme M + 2 Na(+)(in) = 5,6,7,8-tetrahydromethanopterin + methyl-coenzyme M + 2 Na(+)(out). The protein operates within one-carbon metabolism; methanogenesis from CO(2); methyl-coenzyme M from 5,10-methylene-5,6,7,8-tetrahydromethanopterin: step 2/2. Part of a complex that catalyzes the formation of methyl-coenzyme M and tetrahydromethanopterin from coenzyme M and methyl-tetrahydromethanopterin. This is an energy-conserving, sodium-ion translocating step. This chain is Tetrahydromethanopterin S-methyltransferase subunit G, found in Methanosarcina acetivorans (strain ATCC 35395 / DSM 2834 / JCM 12185 / C2A).